We begin with the raw amino-acid sequence, 577 residues long: Arginine--tRNA ligase (577 aa).

Positions 122-132 match the 'HIGH' region motif; sequence PNVAKEMHVGH.

This sequence belongs to the class-I aminoacyl-tRNA synthetase family. Monomer.

It localises to the cytoplasm. The catalysed reaction is tRNA(Arg) + L-arginine + ATP = L-arginyl-tRNA(Arg) + AMP + diphosphate. This Escherichia coli (strain ATCC 8739 / DSM 1576 / NBRC 3972 / NCIMB 8545 / WDCM 00012 / Crooks) protein is Arginine--tRNA ligase.